The chain runs to 65 residues: Large ribosomal subunit protein bL32 (65 aa).

Residues 1–19 are compositionally biased toward basic residues; sequence MAIVPKRKTSKQRKHKRQS. The segment at 1–21 is disordered; the sequence is MAIVPKRKTSKQRKHKRQSHS.

It belongs to the bacterial ribosomal protein bL32 family.

This Mesomycoplasma hyopneumoniae (strain 7448) (Mycoplasma hyopneumoniae) protein is Large ribosomal subunit protein bL32.